A 312-amino-acid chain; its full sequence is MLTFQQIILKLQSYWADQGCALLQPYDMEVGAGTSHTATFLRALGPEPWKAAYVQPSRRPKDGRYGDNPNRLQHYYQFQVVLKPAPDNILELYLGSLEALGFDLKKNDIRFVEDDWENPTLGAWGLGWEVWLNGMEVTQFTYFQQVGGIDCKPATGEITYGLERLAMYLQGVDNVYNLTWTDGLSYGDVYHQNEVEQSTYNFEHSDADFLFTAFGAYEKQANHLIGEQLALPAYEQVLKAAHTFNLLDARGAISVTERAAYIGRIRNLARAVAKAYMDSRARLGFPMAPKAHADEVLAELAKAAEQQGKKAA.

It belongs to the class-II aminoacyl-tRNA synthetase family. As to quaternary structure, tetramer of two alpha and two beta subunits.

The protein localises to the cytoplasm. It carries out the reaction tRNA(Gly) + glycine + ATP = glycyl-tRNA(Gly) + AMP + diphosphate. In Delftia acidovorans (strain DSM 14801 / SPH-1), this protein is Glycine--tRNA ligase alpha subunit.